The primary structure comprises 383 residues: Probable assembly chaperone of rpl4 (383 aa).

A compositionally biased stretch (basic residues) spans 1-12 (MGKPRPHKKKAS). The segment at 1–33 (MGKPRPHKKKASKTREKSVLSAGGSISKRKMNE) is disordered. TPR repeat units follow at residues 35 to 68 (PRKLLEQATILLQTGQADAALSIAQQALEIATSN), 73 to 106 (LSSLNTIAEIYVELGEIDLARKHFLQAVELDPTG), 116 to 147 (AEKFLWLAQLSELGGKDSVQWFEKGVGALRGI), and 193 to 226 (PEVLQTLASIRISQLREDDARAALSRSLELWKDL). A disordered region spans residues 345–383 (NKELGEEMEDDSNVEDGEGEGEEEWEGIESDSDHEMADS). Residues 350–374 (EEMEDDSNVEDGEGEGEEEWEGIES) are compositionally biased toward acidic residues.

Belongs to the ACL4 family.

It is found in the cytoplasm. The protein localises to the nucleus. Functionally, acts as a chaperone for the L4 ribosomal subunit, required for hierarchical ribosome assembly. Shields ribosomal protein L4 until timely release and insertion into the pre-ribosome is possible, once ribosomal protein L18 is present. This chain is Probable assembly chaperone of rpl4, found in Emericella nidulans (strain FGSC A4 / ATCC 38163 / CBS 112.46 / NRRL 194 / M139) (Aspergillus nidulans).